We begin with the raw amino-acid sequence, 957 residues long: Calsyntenin-3 (957 aa).

Residues 1–19 (MTLLLVSLLLASLLQISSG) form the signal peptide. The Cytoplasmic segment spans residues 1-21 (MTLLLVSLLLASLLQISSGNK). Topologically, residues 20-848 (NKANKHKPWI…SHRNSMVPSA (829 aa)) are extracellular. The segment at residues 22–42 (ANKHKPWIEAEYQGIVMENDN) is an intramembrane region (helical). 2 Cadherin domains span residues 29–145 (IEAE…APVF) and 146–246 (VERL…KPSW). Residues 43–73 (TVLLNPPLFALDKDAPLRYAGEICGFRLHGS) are Cytoplasmic-facing. An intramembrane region (helical) is located at residues 74 to 94 (GVPFKAVILDKATGEGLIRAK). The Cytoplasmic portion of the chain corresponds to 95–139 (EPVDCEAQKEHTFTTQAYDCVDGPDGANTKKSHKATVHVRVNDVN). The segment at residues 140–160 (EFAPVFVERLYRAAVTEGKLY) is an intramembrane region (helical). Topologically, residues 161-248 (DRILRVEAID…KPTCKPSWQG (88 aa)) are cytoplasmic. A helical membrane pass occupies residues 249 to 269 (WNKRIEYAPGAGSLALFPGIR). Residues 270–357 (LETCDEPLWN…GTQAVQVPLG (88 aa)) are Lumenal-facing. Residues Asn-299, Asn-327, Asn-347, Asn-508, and Asn-741 are each glycosylated (N-linked (GlcNAc...) asparagine). Residues 849-869 (ATLIIVVCVGFLVLMVILGLV) form a helical membrane-spanning segment. Over 870 to 957 (RIHSLHRRVS…RIIESPPHRY (88 aa)) the chain is Cytoplasmic. The segment at 916–957 (QQTGVAGVAGGQQEEEDSSDSEAADSPSSDERRIIESPPHRY) is disordered. Over residues 928-938 (QEEEDSSDSEA) the composition is skewed to acidic residues. The span at 944–957 (SDERRIIESPPHRY) shows a compositional bias: basic and acidic residues.

Belongs to the calsyntenin family. Interacts (via cadherin domains) with both alpha and beta isoforms of neurexins (NRXN1, NRXN2 and NRXN3). Directly interacts with APBA2. Forms a tripartite complex with APBA2 and APP. Interacts with low affinity with KLC1. Interacts with SLC23A2/SVCT2. As to quaternary structure, interacts with CIDEA; inhibiting the lipid transferase activity of CIDEA. Interacts with CIDEC; inhibiting the lipid transferase activity of CIDEC. In terms of processing, proteolytically processed under normal cellular conditions. A primary zeta-cleavage generates a large extracellular (soluble) N-terminal domain (sAlc) and a short C-terminal transmembrane fragment (CTF1). A secondary cleavage catalyzed by gamma-secretase within the transmembrane domain releases the beta-Alc-beta chain in the extracellular milieu and produces an intracellular fragment (AlcICD). This processing is strongly suppressed in the tripartite complex formed with APBA2 and APP, which seems to prevent the association with gamma-secretase. Post-translationally, ubiquitinated: endoplasmic reticulum-localized protein is ubiquitinated and degraded by the endoplasmic reticulum-associated degradation (ERAD) pathway.

The protein localises to the postsynaptic cell membrane. Its subcellular location is the endoplasmic reticulum membrane. It localises to the golgi apparatus membrane. It is found in the cell projection. The protein resides in the dendrite. The protein localises to the lipid droplet. Its function is as follows. Postsynaptic adhesion molecule that binds to presynaptic neurexins to mediate both excitatory and inhibitory synapse formation. Promotes synapse development by acting as a cell adhesion molecule at the postsynaptic membrane, which associates with both neurexin-alpha and neurexin-beta proteins at the presynaptic membrane. Regulates the balance between excitatory and inhibitory synapses by inhibiting formation of excitatory parallel-fiber synapses and promoting formation of inhibitory synapses in the same neuron. May also be involved in ascorbate (vitamin C) uptake via its interaction with SLC23A2/SVCT2. Complex formation with APBA2 and APP, stabilizes APP metabolism and enhances APBA2-mediated suppression of beta-APP40 secretion, due to the retardation of intracellular APP maturation. In terms of biological role, adipose-specific isoform that plays a key role in adaptive thermogenesis. Facilitates the efficient use of stored triglyceride by promoting multilocular morphology of thermogenic adipocytes: acts by inhibiting the activity of CIDEA and CIDEC on lipid droplets, thereby preventing lipid droplet fusion and facilitating lipid utilization. May also participate in adaptive thermogenesis by promoting sympathetic innervation of thermogenic adipose tissue: acts by driving secretion of neurotrophic factor S100B from brown adipocytes, stimulating neurite outgrowth from sympathetic neurons. The sequence is that of Calsyntenin-3 from Rattus norvegicus (Rat).